The following is a 387-amino-acid chain: Ferrochelatase (387 aa).

Positions 196 and 277 each coordinate Fe cation.

The protein belongs to the ferrochelatase family.

Its subcellular location is the cytoplasm. It carries out the reaction heme b + 2 H(+) = protoporphyrin IX + Fe(2+). It functions in the pathway porphyrin-containing compound metabolism; protoheme biosynthesis; protoheme from protoporphyrin-IX: step 1/1. Catalyzes the ferrous insertion into protoporphyrin IX. In Synechococcus sp. (strain RCC307), this protein is Ferrochelatase.